Reading from the N-terminus, the 303-residue chain is Aspartate carbamoyltransferase catalytic subunit (303 aa).

The carbamoyl phosphate site is built by Arg-48 and Thr-49. Lys-76 is a binding site for L-aspartate. Carbamoyl phosphate-binding residues include Arg-98, His-129, and Gln-132. L-aspartate is bound by residues Arg-162 and Arg-214. The carbamoyl phosphate site is built by Ala-257 and Pro-258.

The protein belongs to the aspartate/ornithine carbamoyltransferase superfamily. ATCase family. Heterododecamer (2C3:3R2) of six catalytic PyrB chains organized as two trimers (C3), and six regulatory PyrI chains organized as three dimers (R2).

The catalysed reaction is carbamoyl phosphate + L-aspartate = N-carbamoyl-L-aspartate + phosphate + H(+). It participates in pyrimidine metabolism; UMP biosynthesis via de novo pathway; (S)-dihydroorotate from bicarbonate: step 2/3. Functionally, catalyzes the condensation of carbamoyl phosphate and aspartate to form carbamoyl aspartate and inorganic phosphate, the committed step in the de novo pyrimidine nucleotide biosynthesis pathway. In Leuconostoc citreum (strain KM20), this protein is Aspartate carbamoyltransferase catalytic subunit.